The chain runs to 279 residues: Proteasome subunit beta (279 aa).

Positions 1 to 53 (MSGTAEFPGRIPAPYLEVGSSSFVELLGSVAPELLPGRRPLPPGDMGDAAPHG) are cleaved as a propeptide — removed in mature form; by autocatalysis. The active-site Nucleophile is the T54.

The protein belongs to the peptidase T1B family. As to quaternary structure, the 20S proteasome core is composed of 14 alpha and 14 beta subunits that assemble into four stacked heptameric rings, resulting in a barrel-shaped structure. The two inner rings, each composed of seven catalytic beta subunits, are sandwiched by two outer rings, each composed of seven alpha subunits. The catalytic chamber with the active sites is on the inside of the barrel. Has a gated structure, the ends of the cylinder being occluded by the N-termini of the alpha-subunits. Is capped by the proteasome-associated ATPase, ARC.

It localises to the cytoplasm. The enzyme catalyses Cleavage of peptide bonds with very broad specificity.. Its pathway is protein degradation; proteasomal Pup-dependent pathway. The formation of the proteasomal ATPase ARC-20S proteasome complex, likely via the docking of the C-termini of ARC into the intersubunit pockets in the alpha-rings, may trigger opening of the gate for substrate entry. Interconversion between the open-gate and close-gate conformations leads to a dynamic regulation of the 20S proteasome proteolysis activity. In terms of biological role, component of the proteasome core, a large protease complex with broad specificity involved in protein degradation. The protein is Proteasome subunit beta of Stackebrandtia nassauensis (strain DSM 44728 / CIP 108903 / NRRL B-16338 / NBRC 102104 / LLR-40K-21).